Reading from the N-terminus, the 348-residue chain is 4-hydroxy-3-methylbut-2-enyl diphosphate reductase (348 aa).

[4Fe-4S] cluster is bound at residue C21. (2E)-4-hydroxy-3-methylbut-2-enyl diphosphate contacts are provided by H50 and H86. Positions 50 and 86 each coordinate dimethylallyl diphosphate. Positions 50 and 86 each coordinate isopentenyl diphosphate. A [4Fe-4S] cluster-binding site is contributed by C108. H136 provides a ligand contact to (2E)-4-hydroxy-3-methylbut-2-enyl diphosphate. H136 contributes to the dimethylallyl diphosphate binding site. An isopentenyl diphosphate-binding site is contributed by H136. The active-site Proton donor is E138. T177 serves as a coordination point for (2E)-4-hydroxy-3-methylbut-2-enyl diphosphate. A [4Fe-4S] cluster-binding site is contributed by C207. Residues S235, S236, N237, and S280 each contribute to the (2E)-4-hydroxy-3-methylbut-2-enyl diphosphate site. Residues S235, S236, N237, and S280 each coordinate dimethylallyl diphosphate. Residues S235, S236, N237, and S280 each coordinate isopentenyl diphosphate.

It belongs to the IspH family. [4Fe-4S] cluster is required as a cofactor.

The catalysed reaction is isopentenyl diphosphate + 2 oxidized [2Fe-2S]-[ferredoxin] + H2O = (2E)-4-hydroxy-3-methylbut-2-enyl diphosphate + 2 reduced [2Fe-2S]-[ferredoxin] + 2 H(+). It carries out the reaction dimethylallyl diphosphate + 2 oxidized [2Fe-2S]-[ferredoxin] + H2O = (2E)-4-hydroxy-3-methylbut-2-enyl diphosphate + 2 reduced [2Fe-2S]-[ferredoxin] + 2 H(+). The protein operates within isoprenoid biosynthesis; dimethylallyl diphosphate biosynthesis; dimethylallyl diphosphate from (2E)-4-hydroxy-3-methylbutenyl diphosphate: step 1/1. It participates in isoprenoid biosynthesis; isopentenyl diphosphate biosynthesis via DXP pathway; isopentenyl diphosphate from 1-deoxy-D-xylulose 5-phosphate: step 6/6. Functionally, catalyzes the conversion of 1-hydroxy-2-methyl-2-(E)-butenyl 4-diphosphate (HMBPP) into a mixture of isopentenyl diphosphate (IPP) and dimethylallyl diphosphate (DMAPP). Acts in the terminal step of the DOXP/MEP pathway for isoprenoid precursor biosynthesis. This is 4-hydroxy-3-methylbut-2-enyl diphosphate reductase from Agrobacterium fabrum (strain C58 / ATCC 33970) (Agrobacterium tumefaciens (strain C58)).